Here is a 101-residue protein sequence, read N- to C-terminus: uncharacterized protein (101 aa).

Basic residues predominate over residues 1-12 (MAAFQHRAKRSK). Disordered stretches follow at residues 1–30 (MAAFQHRAKRSKNGASAKQGKISKADKKRA) and 65–87 (AQDQRSDAQAQQQRAQERSNVDK). Residues 65–78 (AQDQRSDAQAQQQR) show a composition bias toward low complexity.

This is an uncharacterized protein from Eremothecium gossypii (strain ATCC 10895 / CBS 109.51 / FGSC 9923 / NRRL Y-1056) (Yeast).